Here is a 136-residue protein sequence, read N- to C-terminus: Large-conductance mechanosensitive channel (136 aa).

2 helical membrane-spanning segments follow: residues 10 to 30 (FAMR…AAFG) and 76 to 96 (GAFI…FIAI).

This sequence belongs to the MscL family. Homopentamer.

It localises to the cell inner membrane. In terms of biological role, channel that opens in response to stretch forces in the membrane lipid bilayer. May participate in the regulation of osmotic pressure changes within the cell. The chain is Large-conductance mechanosensitive channel from Pectobacterium atrosepticum (strain SCRI 1043 / ATCC BAA-672) (Erwinia carotovora subsp. atroseptica).